We begin with the raw amino-acid sequence, 217 residues long: Chaperone protein TorD (217 aa).

The protein belongs to the TorD/DmsD family. TorD subfamily.

The protein localises to the cytoplasm. Functionally, involved in the biogenesis of TorA. Acts on TorA before the insertion of the molybdenum cofactor and, as a result, probably favors a conformation of the apoenzyme that is competent for acquiring the cofactor. The polypeptide is Chaperone protein TorD (Shewanella oneidensis (strain ATCC 700550 / JCM 31522 / CIP 106686 / LMG 19005 / NCIMB 14063 / MR-1)).